Here is a 321-residue protein sequence, read N- to C-terminus: Ferredoxin--NADP reductase (321 aa).

Positions 33, 41, 46, 86, 119, 277, and 318 each coordinate FAD.

It belongs to the ferredoxin--NADP reductase type 2 family. Homodimer. FAD is required as a cofactor.

The enzyme catalyses 2 reduced [2Fe-2S]-[ferredoxin] + NADP(+) + H(+) = 2 oxidized [2Fe-2S]-[ferredoxin] + NADPH. The protein is Ferredoxin--NADP reductase of Lactococcus lactis subsp. cremoris (strain SK11).